The sequence spans 141 residues: Nucleoside diphosphate kinase (141 aa).

Residues lysine 11, phenylalanine 59, arginine 87, threonine 93, arginine 104, and asparagine 114 each coordinate ATP. The active-site Pros-phosphohistidine intermediate is histidine 117.

The protein belongs to the NDK family. As to quaternary structure, homotetramer. Mg(2+) is required as a cofactor.

The protein localises to the cytoplasm. It catalyses the reaction a 2'-deoxyribonucleoside 5'-diphosphate + ATP = a 2'-deoxyribonucleoside 5'-triphosphate + ADP. It carries out the reaction a ribonucleoside 5'-diphosphate + ATP = a ribonucleoside 5'-triphosphate + ADP. Major role in the synthesis of nucleoside triphosphates other than ATP. The ATP gamma phosphate is transferred to the NDP beta phosphate via a ping-pong mechanism, using a phosphorylated active-site intermediate. This is Nucleoside diphosphate kinase from Yersinia enterocolitica serotype O:8 / biotype 1B (strain NCTC 13174 / 8081).